The primary structure comprises 116 residues: NADH-ubiquinone oxidoreductase chain 3 (116 aa).

3 helical membrane passes run 3 to 23 (LLMTIITITALLSTILAIVSF), 56 to 76 (FFLIAILFLLFDLEIALLLPL), and 85 to 105 (PLLTFTWATAVLFLLTLGLIY).

It belongs to the complex I subunit 3 family.

It localises to the mitochondrion membrane. The catalysed reaction is a ubiquinone + NADH + 5 H(+)(in) = a ubiquinol + NAD(+) + 4 H(+)(out). Core subunit of the mitochondrial membrane respiratory chain NADH dehydrogenase (Complex I) that is believed to belong to the minimal assembly required for catalysis. Complex I functions in the transfer of electrons from NADH to the respiratory chain. The immediate electron acceptor for the enzyme is believed to be ubiquinone. This Paralichthys olivaceus (Bastard halibut) protein is NADH-ubiquinone oxidoreductase chain 3 (MT-ND3).